Consider the following 755-residue polypeptide: Beta-galactosidase (755 aa).

The active-site Proton donor is E382. The active-site Nucleophile is E463.

Belongs to the glycosyl hydrolase 2 family.

The enzyme catalyses Hydrolysis of terminal non-reducing beta-D-galactose residues in beta-D-galactosides.. The chain is Beta-galactosidase (lacZ) from Rhizobium meliloti (Ensifer meliloti).